The primary structure comprises 78 residues: Small ribosomal subunit protein bS18 (78 aa).

The protein belongs to the bacterial ribosomal protein bS18 family. As to quaternary structure, part of the 30S ribosomal subunit. Forms a tight heterodimer with protein bS6.

Functionally, binds as a heterodimer with protein bS6 to the central domain of the 16S rRNA, where it helps stabilize the platform of the 30S subunit. The protein is Small ribosomal subunit protein bS18 of Lactobacillus acidophilus (strain ATCC 700396 / NCK56 / N2 / NCFM).